A 544-amino-acid polypeptide reads, in one-letter code: MGIASLERDTKGGTRFTGCTSIREFEFLGKLGEGTFGEVYKARAKRDGSIVALKKILMHNERDGFPITALREIKLLKMLSHTNIMQLREMAVERSKGEGRKKPSMYMVFPYMEHDLSGLLENPEVHFSEAQIKCYMIQLLEGLKYLHGNCILHRDMKAANLLISNQGILQIADFGLARPFDEAPPQPGKGAGEAKRDYTTLVVTRWYRPPELLLQLRRYTSAIDMWGVGCVFGEMFKGKPILAGNSDLNQAQLIFSLVGTPTEENMPGWSSLPGCEGVKHFGNRPGNLAEVFKDQGPMAISLLTELLKLDWRKRVNAIDALKHPYFSTPPLPARPGDLPSFEDSHELDRRRFRGQRAAMPPAPAGGSVGMSRNGGWSTNSGSRTGAETRNPRISSAARSQGNQLRDAWSNEPQQAWQRRGNEELKDPNHSFSSRHRDGGLPPKPPAPIQHSWASGHSDKTGRDRGYGARYGGPEGSVDSYVPNYGGSDRNRDRDQGTAISDRRGSYYDKSHQTSKLDYSREIPSRRRSRSPNYRERVDRGPYRR.

Residues 25–326 form the Protein kinase domain; that stretch reads FEFLGKLGEG…AIDALKHPYF (302 aa). ATP is bound by residues 31–39 and K54; that span reads LGEGTFGEV. D155 (proton acceptor) is an active-site residue. The tract at residues 357–544 is disordered; it reads AAMPPAPAGG…ERVDRGPYRR (188 aa). The segment covering 374 to 403 has biased composition (polar residues); sequence GGWSTNSGSRTGAETRNPRISSAARSQGNQ. Basic and acidic residues-rich tracts occupy residues 419 to 438, 456 to 466, 488 to 511, and 532 to 544; these read RGNE…HRDG, HSDKTGRDRGY, DRNR…DKSH, and NYRE…PYRR.

Belongs to the protein kinase superfamily. CMGC Ser/Thr protein kinase family. CDC2/CDKX subfamily.

It localises to the nucleus. The enzyme catalyses L-seryl-[protein] + ATP = O-phospho-L-seryl-[protein] + ADP + H(+). It carries out the reaction L-threonyl-[protein] + ATP = O-phospho-L-threonyl-[protein] + ADP + H(+). It catalyses the reaction [DNA-directed RNA polymerase] + ATP = phospho-[DNA-directed RNA polymerase] + ADP + H(+). In terms of biological role, serine/threonine-protein kinase involved in transcription regulation. Phosphorylates the UBC2/RAD6 ubiquitin-conjugating enzyme (E2), leading to monoubiquitination of histone H2B and the silencing of telomeric-associated genes. Also required for histone H3 methylation. Necessary for the recovery from pheromone-induced growth arrest in the cell cycle G1 phase. In Emericella nidulans (strain FGSC A4 / ATCC 38163 / CBS 112.46 / NRRL 194 / M139) (Aspergillus nidulans), this protein is Serine/threonine-protein kinase bur1 (ptkA).